A 29-amino-acid chain; its full sequence is Cyclotide cter-K (29 aa).

The segment at residues 1-29 (HEPCGESCVFIPCITTVVGCSCKNKVCYN) is a cross-link (cyclopeptide (His-Asn)). Intrachain disulfides connect Cys4–Cys20, Cys8–Cys22, and Cys13–Cys27.

Post-translationally, contains 3 disulfide bonds. This is a cyclic peptide.

Probably participates in a plant defense mechanism. This Clitoria ternatea (Butterfly pea) protein is Cyclotide cter-K.